Here is a 424-residue protein sequence, read N- to C-terminus: Enolase (424 aa).

Position 163 (Q163) interacts with (2R)-2-phosphoglycerate. E205 serves as the catalytic Proton donor. Residues D242, E285, and D312 each contribute to the Mg(2+) site. (2R)-2-phosphoglycerate-binding residues include K337, R366, S367, and K388. The active-site Proton acceptor is the K337.

Belongs to the enolase family. It depends on Mg(2+) as a cofactor.

It is found in the cytoplasm. It localises to the secreted. Its subcellular location is the cell surface. The enzyme catalyses (2R)-2-phosphoglycerate = phosphoenolpyruvate + H2O. Its pathway is carbohydrate degradation; glycolysis; pyruvate from D-glyceraldehyde 3-phosphate: step 4/5. Catalyzes the reversible conversion of 2-phosphoglycerate (2-PG) into phosphoenolpyruvate (PEP). It is essential for the degradation of carbohydrates via glycolysis. In Roseobacter denitrificans (strain ATCC 33942 / OCh 114) (Erythrobacter sp. (strain OCh 114)), this protein is Enolase.